Consider the following 508-residue polypeptide: Probable cytosol aminopeptidase (508 aa).

Residues lysine 274 and aspartate 279 each contribute to the Mn(2+) site. Residue lysine 286 is part of the active site. Aspartate 297, aspartate 356, and glutamate 358 together coordinate Mn(2+). Residue arginine 360 is part of the active site.

Belongs to the peptidase M17 family. Mn(2+) serves as cofactor.

The protein resides in the cytoplasm. It carries out the reaction Release of an N-terminal amino acid, Xaa-|-Yaa-, in which Xaa is preferably Leu, but may be other amino acids including Pro although not Arg or Lys, and Yaa may be Pro. Amino acid amides and methyl esters are also readily hydrolyzed, but rates on arylamides are exceedingly low.. It catalyses the reaction Release of an N-terminal amino acid, preferentially leucine, but not glutamic or aspartic acids.. Functionally, presumably involved in the processing and regular turnover of intracellular proteins. Catalyzes the removal of unsubstituted N-terminal amino acids from various peptides. The chain is Probable cytosol aminopeptidase from Paraburkholderia xenovorans (strain LB400).